Reading from the N-terminus, the 423-residue chain is tRNA(Ile)-lysidine synthase (423 aa).

27 to 32 contacts ATP; the sequence is SGGVDS.

The protein belongs to the tRNA(Ile)-lysidine synthase family.

The protein localises to the cytoplasm. It carries out the reaction cytidine(34) in tRNA(Ile2) + L-lysine + ATP = lysidine(34) in tRNA(Ile2) + AMP + diphosphate + H(+). Its function is as follows. Ligates lysine onto the cytidine present at position 34 of the AUA codon-specific tRNA(Ile) that contains the anticodon CAU, in an ATP-dependent manner. Cytidine is converted to lysidine, thus changing the amino acid specificity of the tRNA from methionine to isoleucine. The polypeptide is tRNA(Ile)-lysidine synthase (Streptococcus mutans serotype c (strain ATCC 700610 / UA159)).